Consider the following 105-residue polypeptide: uncharacterized protein (105 aa).

The helical transmembrane segment at L13–I35 threads the bilayer.

The protein resides in the membrane. This is an uncharacterized protein from Archaeoglobus fulgidus (strain ATCC 49558 / DSM 4304 / JCM 9628 / NBRC 100126 / VC-16).